Reading from the N-terminus, the 328-residue chain is MSSGVNSTGSAAAAPEVDKMFFCYQCNQTVTISISSSADPFCPICNQGFLEEYEDPNPNQSLNFNPNSSDSFFPMADPFSTLLPLIFGSSAAAPSGMDFMSLFGPSMQPQARSTQQNPQSDAFDPFTFLQNHLQTLRSSGTHFEFVIENHPSDPGNRMPGNFGDYFFGPGLEQLIQQLAENDPNRYGTPPASKSAIDALPTVKVTKDMLKSEMNQCAVCMDEFEDGSDVKQMPCKHVFHQDCLLPWLELHNSCPVCRFELPTDDPDYENRSQGSQGSGDGQGSVEGQQTPRFSIQLPWPFRRQDGSGSGSGAPGTGGGNLETRGEDLD.

Serine 2 is modified (N-acetylserine). The RING-type; atypical zinc finger occupies 216–257 (CAVCMDEFEDGSDVKQMPCKHVFHQDCLLPWLELHNSCPVCR). The segment at 264 to 328 (DPDYENRSQG…NLETRGEDLD (65 aa)) is disordered. Residues 306–319 (SGSGSGAPGTGGGN) show a composition bias toward gly residues.

Post-translationally, auto-ubiquitinated as part of the enzymatic reaction. As to expression, expressed in leaves, roots, trichomes, stipules, and also in anthers and stigma of flowers.

It carries out the reaction S-ubiquitinyl-[E2 ubiquitin-conjugating enzyme]-L-cysteine + [acceptor protein]-L-lysine = [E2 ubiquitin-conjugating enzyme]-L-cysteine + N(6)-ubiquitinyl-[acceptor protein]-L-lysine.. It participates in protein modification; protein ubiquitination. E3 ubiquitin-protein ligase which accepts ubiquitin from an E2 ubiquitin-conjugating enzyme in the form of a thioester and then directly transfers the ubiquitin to targeted substrates. Promotes polyubiquitination of target proteins. This is E3 ubiquitin-protein ligase RING1-like from Arabidopsis thaliana (Mouse-ear cress).